A 605-amino-acid polypeptide reads, in one-letter code: Probable potassium transport system protein Kup (605 aa).

The next 12 membrane-spanning stretches (helical) occupy residues 18 to 38 (GLVF…IIAL), 46 to 66 (ILGI…LEYA), 97 to 117 (MAFV…DGVI), 138 to 158 (GLSQ…LFVF), 169 to 189 (AFGP…AISV), 204 to 224 (AISF…EVIL), 247 to 267 (AWYF…AFII), 287 to 307 (FYIP…QALI), 339 to 359 (IYIG…MLVF), 368 to 388 (AYGF…TMIF), 395 to 415 (WKVP…VSNC), and 418 to 438 (LPHG…VILI).

The protein belongs to the HAK/KUP transporter (TC 2.A.72) family.

Its subcellular location is the cell inner membrane. It catalyses the reaction K(+)(in) + H(+)(in) = K(+)(out) + H(+)(out). Functionally, transport of potassium into the cell. Likely operates as a K(+):H(+) symporter. In Pelobacter propionicus (strain DSM 2379 / NBRC 103807 / OttBd1), this protein is Probable potassium transport system protein Kup.